The sequence spans 392 residues: Zinc finger protein ham-2 (392 aa).

C2H2-type zinc fingers lie at residues 16 to 39 and 43 to 66; these read FPCS…MQAH and YTCT…YRVH. The C2H2-type 3; degenerate zinc-finger motif lies at 72–95; it reads FMCRCCNWAFPDKTSLHIHMQSML. Disordered stretches follow at residues 106–130 and 278–303; these read LAKS…PFSP and HISH…HSGE. Polar residues predominate over residues 112–123; sequence VVDSTSESGSPR. The segment covering 289–303 has biased composition (low complexity); it reads SDSHISGGSSSHSGE.

Its subcellular location is the nucleus. Its function is as follows. Probable transcription factor that acts downstream of egl-15, to promote migration of the HSN motor neurons from the tail to the gonad primordium during HSN cell differentiation. The polypeptide is Zinc finger protein ham-2 (Caenorhabditis elegans).